The following is a 70-amino-acid chain: uncharacterized protein (70 aa).

The protein to M.pneumoniae MPN377.

This is an uncharacterized protein from Ureaplasma parvum serovar 3 (strain ATCC 700970).